The following is a 404-amino-acid chain: Tryptophan synthase beta chain (404 aa).

K90 carries the N6-(pyridoxal phosphate)lysine modification.

It belongs to the TrpB family. In terms of assembly, tetramer of two alpha and two beta chains. Pyridoxal 5'-phosphate is required as a cofactor.

The catalysed reaction is (1S,2R)-1-C-(indol-3-yl)glycerol 3-phosphate + L-serine = D-glyceraldehyde 3-phosphate + L-tryptophan + H2O. It participates in amino-acid biosynthesis; L-tryptophan biosynthesis; L-tryptophan from chorismate: step 5/5. Its function is as follows. The beta subunit is responsible for the synthesis of L-tryptophan from indole and L-serine. This Geobacillus thermodenitrificans (strain NG80-2) protein is Tryptophan synthase beta chain.